The sequence spans 150 residues: Cytochrome c oxidase subunit 5A, mitochondrial (150 aa).

The N-terminal 41 residues, 1-41 (MLGTALRRCAVAAASRAGSRGLLHPTPVPGPTAAIQSIRCY), are a transit peptide targeting the mitochondrion. An SIFI-degron motif is present at residues 2-17 (LGTALRRCAVAAASRA). An N6-acetyllysine mark is found at K87 and K113. Phosphothreonine is present on T141.

The protein belongs to the cytochrome c oxidase subunit 5A family. In terms of assembly, component of the cytochrome c oxidase (complex IV, CIV), a multisubunit enzyme composed of 14 subunits. The complex is composed of a catalytic core of 3 subunits MT-CO1, MT-CO2 and MT-CO3, encoded in the mitochondrial DNA, and 11 supernumerary subunits COX4I, COX5A, COX5B, COX6A, COX6B, COX6C, COX7A, COX7B, COX7C, COX8 and NDUFA4, which are encoded in the nuclear genome. The complex exists as a monomer or a dimer and forms supercomplexes (SCs) in the inner mitochondrial membrane with NADH-ubiquinone oxidoreductase (complex I, CI) and ubiquinol-cytochrome c oxidoreductase (cytochrome b-c1 complex, complex III, CIII), resulting in different assemblies (supercomplex SCI(1)III(2)IV(1) and megacomplex MCI(2)III(2)IV(2)). Interacts with AFG1L. Interacts with RAB5IF. In terms of processing, in response to mitochondrial stress, the precursor protein is ubiquitinated by the SIFI complex in the cytoplasm before mitochondrial import, leading to its degradation. Within the SIFI complex, UBR4 initiates ubiquitin chain that are further elongated or branched by KCMF1.

It localises to the mitochondrion inner membrane. The protein operates within energy metabolism; oxidative phosphorylation. Component of the cytochrome c oxidase, the last enzyme in the mitochondrial electron transport chain which drives oxidative phosphorylation. The respiratory chain contains 3 multisubunit complexes succinate dehydrogenase (complex II, CII), ubiquinol-cytochrome c oxidoreductase (cytochrome b-c1 complex, complex III, CIII) and cytochrome c oxidase (complex IV, CIV), that cooperate to transfer electrons derived from NADH and succinate to molecular oxygen, creating an electrochemical gradient over the inner membrane that drives transmembrane transport and the ATP synthase. Cytochrome c oxidase is the component of the respiratory chain that catalyzes the reduction of oxygen to water. Electrons originating from reduced cytochrome c in the intermembrane space (IMS) are transferred via the dinuclear copper A center (CU(A)) of subunit 2 and heme A of subunit 1 to the active site in subunit 1, a binuclear center (BNC) formed by heme A3 and copper B (CU(B)). The BNC reduces molecular oxygen to 2 water molecules using 4 electrons from cytochrome c in the IMS and 4 protons from the mitochondrial matrix. In Otolemur crassicaudatus (Brown greater galago), this protein is Cytochrome c oxidase subunit 5A, mitochondrial (COX5A).